The chain runs to 85 residues: Small ribosomal subunit protein uS17 (85 aa).

It belongs to the universal ribosomal protein uS17 family. Part of the 30S ribosomal subunit.

Its function is as follows. One of the primary rRNA binding proteins, it binds specifically to the 5'-end of 16S ribosomal RNA. This Mycoplasma capricolum subsp. capricolum (strain California kid / ATCC 27343 / NCTC 10154) protein is Small ribosomal subunit protein uS17.